A 149-amino-acid polypeptide reads, in one-letter code: Cytochrome c oxidase subunit 5A, mitochondrial (149 aa).

It belongs to the cytochrome c oxidase subunit 5A family. Component of the cytochrome c oxidase (complex IV, CIV), a multisubunit enzyme composed of a catalytic core of 3 subunits and several supernumerary subunits. The complex exists as a monomer or a dimer and forms supercomplexes (SCs) in the inner mitochondrial membrane with ubiquinol-cytochrome c oxidoreductase (cytochrome b-c1 complex, complex III, CIII).

The protein resides in the mitochondrion inner membrane. The protein operates within energy metabolism; oxidative phosphorylation. Component of the cytochrome c oxidase, the last enzyme in the mitochondrial electron transport chain which drives oxidative phosphorylation. The respiratory chain contains 3 multisubunit complexes succinate dehydrogenase (complex II, CII), ubiquinol-cytochrome c oxidoreductase (cytochrome b-c1 complex, complex III, CIII) and cytochrome c oxidase (complex IV, CIV), that cooperate to transfer electrons derived from NADH and succinate to molecular oxygen, creating an electrochemical gradient over the inner membrane that drives transmembrane transport and the ATP synthase. Cytochrome c oxidase is the component of the respiratory chain that catalyzes the reduction of oxygen to water. Electrons originating from reduced cytochrome c in the intermembrane space (IMS) are transferred via the dinuclear copper A center (CU(A)) of subunit 2 and heme A of subunit 1 to the active site in subunit 1, a binuclear center (BNC) formed by heme A3 and copper B (CU(B)). The BNC reduces molecular oxygen to 2 water molecules using 4 electrons from cytochrome c in the IMS and 4 protons from the mitochondrial matrix. The polypeptide is Cytochrome c oxidase subunit 5A, mitochondrial (Drosophila melanogaster (Fruit fly)).